The chain runs to 187 residues: Elongation factor P (187 aa).

The protein belongs to the elongation factor P family.

It is found in the cytoplasm. It functions in the pathway protein biosynthesis; polypeptide chain elongation. Functionally, involved in peptide bond synthesis. Stimulates efficient translation and peptide-bond synthesis on native or reconstituted 70S ribosomes in vitro. Probably functions indirectly by altering the affinity of the ribosome for aminoacyl-tRNA, thus increasing their reactivity as acceptors for peptidyl transferase. The chain is Elongation factor P from Ruegeria pomeroyi (strain ATCC 700808 / DSM 15171 / DSS-3) (Silicibacter pomeroyi).